Reading from the N-terminus, the 339-residue chain is Holliday junction branch migration complex subunit RuvB (339 aa).

The tract at residues 1–181 (MEERLVSGYE…FGMVHRLEFY (181 aa)) is large ATPase domain (RuvB-L). Residues Leu-20, Arg-21, Gly-62, Lys-65, Thr-66, Thr-67, 128–130 (EDF), Arg-171, Tyr-181, and Arg-218 each bind ATP. Thr-66 contributes to the Mg(2+) binding site. The segment at 182 to 252 (SVEELMLIIN…NAKAALDLLE (71 aa)) is small ATPAse domain (RuvB-S). Residues 255–339 (ELGLDPTDRL…NKNAGELSLW (85 aa)) are head domain (RuvB-H). DNA-binding residues include Arg-310 and Arg-315.

This sequence belongs to the RuvB family. As to quaternary structure, homohexamer. Forms an RuvA(8)-RuvB(12)-Holliday junction (HJ) complex. HJ DNA is sandwiched between 2 RuvA tetramers; dsDNA enters through RuvA and exits via RuvB. An RuvB hexamer assembles on each DNA strand where it exits the tetramer. Each RuvB hexamer is contacted by two RuvA subunits (via domain III) on 2 adjacent RuvB subunits; this complex drives branch migration. In the full resolvosome a probable DNA-RuvA(4)-RuvB(12)-RuvC(2) complex forms which resolves the HJ.

The protein localises to the cytoplasm. It carries out the reaction ATP + H2O = ADP + phosphate + H(+). Its function is as follows. The RuvA-RuvB-RuvC complex processes Holliday junction (HJ) DNA during genetic recombination and DNA repair, while the RuvA-RuvB complex plays an important role in the rescue of blocked DNA replication forks via replication fork reversal (RFR). RuvA specifically binds to HJ cruciform DNA, conferring on it an open structure. The RuvB hexamer acts as an ATP-dependent pump, pulling dsDNA into and through the RuvAB complex. RuvB forms 2 homohexamers on either side of HJ DNA bound by 1 or 2 RuvA tetramers; 4 subunits per hexamer contact DNA at a time. Coordinated motions by a converter formed by DNA-disengaged RuvB subunits stimulates ATP hydrolysis and nucleotide exchange. Immobilization of the converter enables RuvB to convert the ATP-contained energy into a lever motion, pulling 2 nucleotides of DNA out of the RuvA tetramer per ATP hydrolyzed, thus driving DNA branch migration. The RuvB motors rotate together with the DNA substrate, which together with the progressing nucleotide cycle form the mechanistic basis for DNA recombination by continuous HJ branch migration. Branch migration allows RuvC to scan DNA until it finds its consensus sequence, where it cleaves and resolves cruciform DNA. This chain is Holliday junction branch migration complex subunit RuvB, found in Carboxydothermus hydrogenoformans (strain ATCC BAA-161 / DSM 6008 / Z-2901).